The following is a 305-amino-acid chain: RNA-binding protein with serine-rich domain 1 (305 aa).

Residues 1 to 10 show a composition bias toward basic residues; it reads MDLSGVKKKS. The segment at 1-161 is necessary for interaction with SRP54, nuclear localization and exon-skipping; sequence MDLSGVKKKS…KRRSPSPKPT (161 aa). The interval 1 to 170 is disordered; the sequence is MDLSGVKKKS…TKVHIGRLTR (170 aa). The interval 1–220 is necessary for interaction with the cleaved p110 isoform of CDC2L1; the sequence is MDLSGVKKKS…ENPDEAEKAL (220 aa). Residues lysine 7 and lysine 15 each participate in a glycyl lysine isopeptide (Lys-Gly) (interchain with G-Cter in SUMO2) cross-link. The span at 33-59 shows a compositional bias: basic and acidic residues; the sequence is DRSDEKSKDRSKDKGATKESSEKDRGR. Serine 53 is subject to Phosphoserine; by CK2. Residues 68-126 are compositionally biased toward low complexity; the sequence is ASSGSSSTRSRSSSTSSSGSSTSTGSSSGSSSSSASSRSGSSSTSRSSSSSSSSGSPSP. Residues 69–121 form a necessary for interactions with UPF2 and UPF3B and UPF2-dependent NMD region; it reads SSGSSSTRSRSSSTSSSGSSTSTGSSSGSSSSSASSRSGSSSTSRSSSSSSSS. Composition is skewed to basic residues over residues 127–143 and 151–167; these read SRRR…KSKP and RKRR…HIGR. Phosphoserine occurs at positions 155 and 157. The necessary for interaction with PNN and exon-skipping stretch occupies residues 156–242; sequence PSPKPTKVHI…ITATAVLAPW (87 aa). Residues 159–244 are interaction with SAP18 and ACIN1; it reads KPTKVHIGRL…ATAVLAPWPR (86 aa). The residue at position 161 (threonine 161) is a Phosphothreonine. The region spanning 161-240 is the RRM domain; that stretch reads TKVHIGRLTR…QEITATAVLA (80 aa). Lysine 218 is modified (N6-acetyllysine). Residues 238–305 form a necessary for interaction with TRA2B, nuclear localization and exon-skipping region; it reads VLAPWPRPPP…RSRSSSNSSR (68 aa). Positions 240–305 are disordered; sequence APWPRPPPRR…RSRSSSNSSR (66 aa). The span at 242–262 shows a compositional bias: pro residues; the sequence is WPRPPPRRFSPPRRMLPPPPM. The span at 266–298 shows a compositional bias: basic residues; it reads SPPRMRRRSRSPRRRSPVRRRSRSPGRRRHRSR.

Belongs to the splicing factor SR family. In terms of assembly, found in mRNA splicing-dependent exon junction complexes (EJC). Found in a post-splicing complex with NXF1, RBM8A, UPF1, UPF2, UPF3A, UPF3B and RNPS1. Component of the heterotrimeric ASAP (apoptosis- and splicing-associated protein) and PSAP complexes consisting of RNPS1, SAP18 and either ACIN1 or PNN, respectively; the ASAP and PSAP complexes probably are formed mutually exclusive. Component of the active spliceosome. Associates with polysomes. Interacts with the cleaved p110 isoform of CDC2L1, CSNK2A1, PNN, SART3, SRP54, SRRM1 and TRA2B/SFRS10. In terms of processing, phosphorylated on one or more of the four Ser/Thr residues (Ser-43, Thr-49, Ser-52 or Ser-53). Ser-53 phosphorylation site is important for splicing and translation stimulation activity in vitro. Ubiquitous.

It localises to the nucleus. The protein resides in the nucleus speckle. It is found in the cytoplasm. Part of pre- and post-splicing multiprotein mRNP complexes. Auxiliary component of the splicing-dependent multiprotein exon junction complex (EJC) deposited at splice junction on mRNAs. The EJC is a dynamic structure consisting of core proteins and several peripheral nuclear and cytoplasmic associated factors that join the complex only transiently either during EJC assembly or during subsequent mRNA metabolism. Component of the ASAP and PSAP complexes which bind RNA in a sequence-independent manner and are proposed to be recruited to the EJC prior to or during the splicing process and to regulate specific excision of introns in specific transcription subsets. The ASAP complex can inhibit RNA processing during in vitro splicing reactions. The ASAP complex promotes apoptosis and is disassembled after induction of apoptosis. Enhances the formation of the ATP-dependent A complex of the spliceosome. Involved in both constitutive splicing and, in association with SRP54 and TRA2B/SFRS10, in distinctive modulation of alternative splicing in a substrate-dependent manner. Involved in the splicing modulation of BCL2L1/Bcl-X (and probably other apoptotic genes); specifically inhibits formation of proapoptotic isoforms such as Bcl-X(S); the activity is different from the established EJC assembly and function. Participates in mRNA 3'-end cleavage. Involved in UPF2-dependent nonsense-mediated decay (NMD) of mRNAs containing premature stop codons. Also mediates increase of mRNA abundance and translational efficiency. Binds spliced mRNA 20-25 nt upstream of exon-exon junctions. In Homo sapiens (Human), this protein is RNA-binding protein with serine-rich domain 1 (RNPS1).